A 294-amino-acid polypeptide reads, in one-letter code: Elongation factor Ts (294 aa).

Positions 79-82 are involved in Mg(2+) ion dislocation from EF-Tu; the sequence is TDFV.

This sequence belongs to the EF-Ts family.

It is found in the cytoplasm. In terms of biological role, associates with the EF-Tu.GDP complex and induces the exchange of GDP to GTP. It remains bound to the aminoacyl-tRNA.EF-Tu.GTP complex up to the GTP hydrolysis stage on the ribosome. The protein is Elongation factor Ts of Shouchella clausii (strain KSM-K16) (Alkalihalobacillus clausii).